The following is a 791-amino-acid chain: Outer membrane protein assembly factor BamA (791 aa).

5 consecutive POTRA domains span residues 59 to 130 (NAIA…VTEK), 131 to 209 (PRID…VEEG), 212 to 298 (LYIK…VKEG), 301 to 383 (YKLG…IRKR), and 386 to 459 (VYIN…VKEQ).

Belongs to the BamA family. In terms of assembly, part of the Bam complex.

It is found in the cell outer membrane. Functionally, part of the outer membrane protein assembly complex, which is involved in assembly and insertion of beta-barrel proteins into the outer membrane. This is Outer membrane protein assembly factor BamA from Nitratidesulfovibrio vulgaris (strain ATCC 29579 / DSM 644 / CCUG 34227 / NCIMB 8303 / VKM B-1760 / Hildenborough) (Desulfovibrio vulgaris).